A 292-amino-acid chain; its full sequence is ATP synthase gamma chain (292 aa).

This sequence belongs to the ATPase gamma chain family. F-type ATPases have 2 components, CF(1) - the catalytic core - and CF(0) - the membrane proton channel. CF(1) has five subunits: alpha(3), beta(3), gamma(1), delta(1), epsilon(1). CF(0) has three main subunits: a, b and c.

The protein resides in the cell membrane. Produces ATP from ADP in the presence of a proton gradient across the membrane. The gamma chain is believed to be important in regulating ATPase activity and the flow of protons through the CF(0) complex. In Streptococcus thermophilus (strain CNRZ 1066), this protein is ATP synthase gamma chain.